A 390-amino-acid chain; its full sequence is Succinate--CoA ligase [ADP-forming] subunit beta (390 aa).

One can recognise an ATP-grasp domain in the interval Lys-9 to Glu-244. ATP-binding positions include Lys-46, Gly-53–Gly-55, Glu-99, Ala-102, and Glu-107. Asn-199 and Asp-213 together coordinate Mg(2+). Residues Asn-264 and Gly-321–Val-323 contribute to the substrate site.

The protein belongs to the succinate/malate CoA ligase beta subunit family. In terms of assembly, heterotetramer of two alpha and two beta subunits. Mg(2+) serves as cofactor.

The enzyme catalyses succinate + ATP + CoA = succinyl-CoA + ADP + phosphate. It catalyses the reaction GTP + succinate + CoA = succinyl-CoA + GDP + phosphate. It participates in carbohydrate metabolism; tricarboxylic acid cycle; succinate from succinyl-CoA (ligase route): step 1/1. Its function is as follows. Succinyl-CoA synthetase functions in the citric acid cycle (TCA), coupling the hydrolysis of succinyl-CoA to the synthesis of either ATP or GTP and thus represents the only step of substrate-level phosphorylation in the TCA. The beta subunit provides nucleotide specificity of the enzyme and binds the substrate succinate, while the binding sites for coenzyme A and phosphate are found in the alpha subunit. This chain is Succinate--CoA ligase [ADP-forming] subunit beta, found in Nitratiruptor sp. (strain SB155-2).